Here is a 322-residue protein sequence, read N- to C-terminus: MQLKNSMLLLTALAAGSSVARLHGHERRHLHHAGEKREVGDTVYATINGVLVSWINEWSGEAKTSDAPVSQATPVSNAVAAAAAASTPEPSSSHSDSSSSSGVSADWTNTPAEGEYCTDGFGGRTEPSGSGIFYKGNVGKPWGSNIIEVSPENAKKYKHVAQFVGSDTDPWTVVFWNKIGPDGGLTGWYGNSALTLHLEAGETKYVAFDENSQGAWGAAKGDELPKDQFGGYSCTWGEFDFDSKINQGWSGWDVSAIQAENAHHEVQGMKICNHAGELCSIISHGLSKVIDAYTADLAGVDGIGGKVVPGPTRLVVNLDYKE.

The first 20 residues, 1–20, serve as a signal peptide directing secretion; sequence MQLKNSMLLLTALAAGSSVA. Residues 80–105 are compositionally biased toward low complexity; the sequence is AAAAAASTPEPSSSHSDSSSSSGVSA. Positions 80-109 are disordered; sequence AAAAAASTPEPSSSHSDSSSSSGVSADWTN.

Its subcellular location is the secreted. This Aspergillus fumigatus (strain ATCC MYA-4609 / CBS 101355 / FGSC A1100 / Af293) (Neosartorya fumigata) protein is Allergen Asp f 4.